The following is a 111-amino-acid chain: ATP-dependent Clp protease adapter protein ClpS (111 aa).

This sequence belongs to the ClpS family. In terms of assembly, binds to the N-terminal domain of the chaperone ClpA.

In terms of biological role, involved in the modulation of the specificity of the ClpAP-mediated ATP-dependent protein degradation. The sequence is that of ATP-dependent Clp protease adapter protein ClpS from Legionella pneumophila (strain Paris).